Reading from the N-terminus, the 1073-residue chain is Receptor-type guanylate cyclase gcy-23 (1073 aa).

The first 15 residues, 1 to 15 (MRRELFIFLLLLGEC), serve as a signal peptide directing secretion. The Extracellular portion of the chain corresponds to 16–458 (ANVKVKVGHI…FRNEKCDYTT (443 aa)). Asparagine 336 carries N-linked (GlcNAc...) asparagine glycosylation. A helical membrane pass occupies residues 459-479 (LIIGGCIVLLIILLIICFFIL). The Cytoplasmic segment spans residues 480-1073 (SRVCENRALA…QQQNFSQLGI (594 aa)). Residues 508 to 808 (MKSMLSIGSS…RVRLNTENYL (301 aa)) form the Protein kinase domain. A coiled-coil region spans residues 813–844 (SLVDQMMRMMEQYANNLEKLVAERTGMLEEAN). The region spanning 878–1008 (TVMFSDIVGF…DTVNVASRME (131 aa)) is the Guanylate cyclase domain. Residues aspartate 883, isoleucine 884, and aspartate 927 each coordinate Mg(2+).

This sequence belongs to the adenylyl cyclase class-4/guanylyl cyclase family. As to expression, expressed specifically in AFD sensory neurons.

It is found in the cell membrane. The protein resides in the cell projection. It localises to the cilium. It carries out the reaction GTP = 3',5'-cyclic GMP + diphosphate. Functionally, guanylate cyclase involved in the production of the second messenger cGMP. Regulates thermotaxis responses in AFD sensory neurons. May regulate AFD neuronal activity such as calcium responses to temperature gradients. The polypeptide is Receptor-type guanylate cyclase gcy-23 (Caenorhabditis elegans).